The primary structure comprises 297 residues: N-acetylneuraminate lyase (297 aa).

Aceneuramate is bound by residues S47 and T48. Y137 (proton donor) is an active-site residue. K165 (schiff-base intermediate with substrate) is an active-site residue. T167, G189, D191, E192, and S208 together coordinate aceneuramate.

The protein belongs to the DapA family. NanA subfamily. As to quaternary structure, homotetramer.

It is found in the cytoplasm. It carries out the reaction aceneuramate = aldehydo-N-acetyl-D-mannosamine + pyruvate. It participates in amino-sugar metabolism; N-acetylneuraminate degradation; D-fructose 6-phosphate from N-acetylneuraminate: step 1/5. Its function is as follows. Catalyzes the reversible aldol cleavage of N-acetylneuraminic acid (sialic acid; Neu5Ac) to form pyruvate and N-acetylmannosamine (ManNAc) via a Schiff base intermediate. The polypeptide is N-acetylneuraminate lyase (Salmonella paratyphi A (strain AKU_12601)).